A 464-amino-acid polypeptide reads, in one-letter code: Soluble pyridine nucleotide transhydrogenase (464 aa).

Residue 35–44 coordinates FAD; sequence DDRRQVGGNC.

Belongs to the class-I pyridine nucleotide-disulfide oxidoreductase family. Requires FAD as cofactor.

It is found in the cytoplasm. The enzyme catalyses NAD(+) + NADPH = NADH + NADP(+). Its function is as follows. Conversion of NADPH, generated by peripheral catabolic pathways, to NADH, which can enter the respiratory chain for energy generation. This is Soluble pyridine nucleotide transhydrogenase from Pseudomonas putida (strain ATCC 47054 / DSM 6125 / CFBP 8728 / NCIMB 11950 / KT2440).